Consider the following 615-residue polypeptide: Membrane protein insertase YidC (615 aa).

The next 5 helical transmembrane spans lie at 9–29 (LMFI…VLGP), 384–404 (LVGN…LVLY), 458–478 (LPML…TVTI), 516–536 (LIGA…FTMW), and 556–576 (WFPV…VIYW).

Belongs to the OXA1/ALB3/YidC family. Type 1 subfamily. As to quaternary structure, interacts with the Sec translocase complex via SecD. Specifically interacts with transmembrane segments of nascent integral membrane proteins during membrane integration.

Its subcellular location is the cell inner membrane. Required for the insertion and/or proper folding and/or complex formation of integral membrane proteins into the membrane. Involved in integration of membrane proteins that insert both dependently and independently of the Sec translocase complex, as well as at least some lipoproteins. Aids folding of multispanning membrane proteins. The chain is Membrane protein insertase YidC from Caulobacter vibrioides (strain ATCC 19089 / CIP 103742 / CB 15) (Caulobacter crescentus).